The chain runs to 245 residues: NAD(P)H-quinone oxidoreductase subunit K (245 aa).

Residues Cys58, Cys59, Cys123, and Cys154 each coordinate [4Fe-4S] cluster.

This sequence belongs to the complex I 20 kDa subunit family. As to quaternary structure, NDH-1 can be composed of about 15 different subunits; different subcomplexes with different compositions have been identified which probably have different functions. The cofactor is [4Fe-4S] cluster.

Its subcellular location is the cellular thylakoid membrane. The catalysed reaction is a plastoquinone + NADH + (n+1) H(+)(in) = a plastoquinol + NAD(+) + n H(+)(out). The enzyme catalyses a plastoquinone + NADPH + (n+1) H(+)(in) = a plastoquinol + NADP(+) + n H(+)(out). Functionally, NDH-1 shuttles electrons from an unknown electron donor, via FMN and iron-sulfur (Fe-S) centers, to quinones in the respiratory and/or the photosynthetic chain. The immediate electron acceptor for the enzyme in this species is believed to be plastoquinone. Couples the redox reaction to proton translocation, and thus conserves the redox energy in a proton gradient. Cyanobacterial NDH-1 also plays a role in inorganic carbon-concentration. The polypeptide is NAD(P)H-quinone oxidoreductase subunit K (Nostoc sp. (strain PCC 7120 / SAG 25.82 / UTEX 2576)).